A 584-amino-acid chain; its full sequence is DNA mismatch repair protein MutL (584 aa).

It belongs to the DNA mismatch repair MutL/HexB family.

In terms of biological role, this protein is involved in the repair of mismatches in DNA. It is required for dam-dependent methyl-directed DNA mismatch repair. May act as a 'molecular matchmaker', a protein that promotes the formation of a stable complex between two or more DNA-binding proteins in an ATP-dependent manner without itself being part of a final effector complex. The chain is DNA mismatch repair protein MutL from Buchnera aphidicola subsp. Acyrthosiphon pisum (strain Tuc7).